Reading from the N-terminus, the 336-residue chain is Biotin synthase (336 aa).

Residues 57–286 (HHGKSIDLCS…RAIVRTAGGR (230 aa)) enclose the Radical SAM core domain. [4Fe-4S] cluster contacts are provided by Cys-75, Cys-79, and Cys-82. [2Fe-2S] cluster-binding residues include Ser-119, Cys-151, Cys-211, and Arg-281.

Belongs to the radical SAM superfamily. Biotin synthase family. In terms of assembly, homodimer. [4Fe-4S] cluster serves as cofactor. Requires [2Fe-2S] cluster as cofactor.

It catalyses the reaction (4R,5S)-dethiobiotin + (sulfur carrier)-SH + 2 reduced [2Fe-2S]-[ferredoxin] + 2 S-adenosyl-L-methionine = (sulfur carrier)-H + biotin + 2 5'-deoxyadenosine + 2 L-methionine + 2 oxidized [2Fe-2S]-[ferredoxin]. The protein operates within cofactor biosynthesis; biotin biosynthesis; biotin from 7,8-diaminononanoate: step 2/2. Its function is as follows. Catalyzes the conversion of dethiobiotin (DTB) to biotin by the insertion of a sulfur atom into dethiobiotin via a radical-based mechanism. This Desulfotalea psychrophila (strain LSv54 / DSM 12343) protein is Biotin synthase.